The following is a 401-amino-acid chain: Glucose/mannose transporter GlcP (401 aa).

12 helical membrane passes run 11–31 (AFFF…PFLL), 43–63 (VIIF…PLMI), 78–98 (IMLV…IIVM), 99–119 (AFLL…FVIA), 132–152 (EVLF…FIDI), 156–176 (FLPY…WLIF), 212–232 (LGFF…FANF), 247–267 (LISV…IGFV), 278–298 (LFSC…SNPI), 306–326 (LIGL…SIII), 336–356 (LFIA…GWSL), and 360–380 (TILL…GISV).

The protein belongs to the major facilitator superfamily.

Its subcellular location is the cell membrane. Can transport glucose, mannose, 2-deoxyglucose and methyl alpha-glucoside, but not galactose. The protein is Glucose/mannose transporter GlcP (glcP) of Bacillus subtilis (strain 168).